A 333-amino-acid polypeptide reads, in one-letter code: Biotin synthase (333 aa).

Residues 47-273 (YYGNKVKLNM…MNPTKEIRIA (227 aa)) enclose the Radical SAM core domain. [4Fe-4S] cluster-binding residues include Cys65, Cys69, and Cys72. Residues Cys109, Cys141, Cys201, and Arg271 each coordinate [2Fe-2S] cluster.

It belongs to the radical SAM superfamily. Biotin synthase family. Homodimer. [4Fe-4S] cluster serves as cofactor. It depends on [2Fe-2S] cluster as a cofactor.

It carries out the reaction (4R,5S)-dethiobiotin + (sulfur carrier)-SH + 2 reduced [2Fe-2S]-[ferredoxin] + 2 S-adenosyl-L-methionine = (sulfur carrier)-H + biotin + 2 5'-deoxyadenosine + 2 L-methionine + 2 oxidized [2Fe-2S]-[ferredoxin]. Its pathway is cofactor biosynthesis; biotin biosynthesis; biotin from 7,8-diaminononanoate: step 2/2. Catalyzes the conversion of dethiobiotin (DTB) to biotin by the insertion of a sulfur atom into dethiobiotin via a radical-based mechanism. In Geobacillus kaustophilus (strain HTA426), this protein is Biotin synthase.